We begin with the raw amino-acid sequence, 94 residues long: MSRSLTKGPFIADHLLKKIQKLNAQGKKKVIVTWSRASTIVPLMIGHTIAVHNGREHIPVFITDQMVGHKLGEFSPTRTYRGHIKTKGDKKSKR.

It belongs to the universal ribosomal protein uS19 family.

The protein resides in the plastid. Its subcellular location is the chloroplast. Its function is as follows. Protein S19 forms a complex with S13 that binds strongly to the 16S ribosomal RNA. The protein is Small ribosomal subunit protein uS19c of Pleurastrum terricola (Filamentous green alga).